Consider the following 83-residue polypeptide: Large ribosomal subunit protein bL31B (83 aa).

This sequence belongs to the bacterial ribosomal protein bL31 family. Type B subfamily. As to quaternary structure, part of the 50S ribosomal subunit.

This Bacteroides fragilis (strain ATCC 25285 / DSM 2151 / CCUG 4856 / JCM 11019 / LMG 10263 / NCTC 9343 / Onslow / VPI 2553 / EN-2) protein is Large ribosomal subunit protein bL31B.